The sequence spans 287 residues: Pyridoxal 5'-phosphate synthase subunit PdxS (287 aa).

D-ribose 5-phosphate is bound at residue aspartate 21. Residue lysine 78 is the Schiff-base intermediate with D-ribose 5-phosphate of the active site. Glycine 150 contacts D-ribose 5-phosphate. Arginine 162 provides a ligand contact to D-glyceraldehyde 3-phosphate. D-ribose 5-phosphate is bound by residues glycine 211 and 232–233; that span reads GS.

This sequence belongs to the PdxS/SNZ family. In the presence of PdxT, forms a dodecamer of heterodimers.

It carries out the reaction aldehydo-D-ribose 5-phosphate + D-glyceraldehyde 3-phosphate + L-glutamine = pyridoxal 5'-phosphate + L-glutamate + phosphate + 3 H2O + H(+). The protein operates within cofactor biosynthesis; pyridoxal 5'-phosphate biosynthesis. Its function is as follows. Catalyzes the formation of pyridoxal 5'-phosphate from ribose 5-phosphate (RBP), glyceraldehyde 3-phosphate (G3P) and ammonia. The ammonia is provided by the PdxT subunit. Can also use ribulose 5-phosphate and dihydroxyacetone phosphate as substrates, resulting from enzyme-catalyzed isomerization of RBP and G3P, respectively. In Francisella tularensis subsp. tularensis (strain FSC 198), this protein is Pyridoxal 5'-phosphate synthase subunit PdxS.